Reading from the N-terminus, the 271-residue chain is 3-methyl-2-oxobutanoate hydroxymethyltransferase (271 aa).

Residues D49 and D88 each contribute to the Mg(2+) site. 3-methyl-2-oxobutanoate is bound by residues 49 to 50 (DS), D88, and K118. Residue E120 participates in Mg(2+) binding. The active-site Proton acceptor is the E187.

This sequence belongs to the PanB family. As to quaternary structure, homodecamer; pentamer of dimers. Mg(2+) serves as cofactor.

It localises to the cytoplasm. The catalysed reaction is 3-methyl-2-oxobutanoate + (6R)-5,10-methylene-5,6,7,8-tetrahydrofolate + H2O = 2-dehydropantoate + (6S)-5,6,7,8-tetrahydrofolate. The protein operates within cofactor biosynthesis; (R)-pantothenate biosynthesis; (R)-pantoate from 3-methyl-2-oxobutanoate: step 1/2. Catalyzes the reversible reaction in which hydroxymethyl group from 5,10-methylenetetrahydrofolate is transferred onto alpha-ketoisovalerate to form ketopantoate. The chain is 3-methyl-2-oxobutanoate hydroxymethyltransferase from Bartonella tribocorum (strain CIP 105476 / IBS 506).